Reading from the N-terminus, the 254-residue chain is 5-oxoprolinase subunit A (254 aa).

It belongs to the LamB/PxpA family. Forms a complex composed of PxpA, PxpB and PxpC.

The catalysed reaction is 5-oxo-L-proline + ATP + 2 H2O = L-glutamate + ADP + phosphate + H(+). Catalyzes the cleavage of 5-oxoproline to form L-glutamate coupled to the hydrolysis of ATP to ADP and inorganic phosphate. The chain is 5-oxoprolinase subunit A from Burkholderia mallei (strain NCTC 10247).